The primary structure comprises 258 residues: MLAKRIIPCLDVKDGQVVKGVQFRNHEIIGDIVPLAQRYAQEGADELVFYDITASSDGRVVDKSWVARVAEVIDIPFCVAGGIKSVEDASQILTFGADKISINSPALADPTLITRLADRYGVQCIVVGIDTWYDTESDSYQVYQFTGDEKRTKATTWQTEDWVKEIQLRGAGEIVLNMMNQDGVRNGYDLRQLQQMRAICHVPLIASGGAGTPDHFLEAFRDADVDGALAASVFHKQIINIGELKKYLSEQGVEIRVC.

Catalysis depends on residues Asp11 and Asp130.

Belongs to the HisA/HisF family. In terms of assembly, heterodimer of HisH and HisF.

Its subcellular location is the cytoplasm. The enzyme catalyses 5-[(5-phospho-1-deoxy-D-ribulos-1-ylimino)methylamino]-1-(5-phospho-beta-D-ribosyl)imidazole-4-carboxamide + L-glutamine = D-erythro-1-(imidazol-4-yl)glycerol 3-phosphate + 5-amino-1-(5-phospho-beta-D-ribosyl)imidazole-4-carboxamide + L-glutamate + H(+). It functions in the pathway amino-acid biosynthesis; L-histidine biosynthesis; L-histidine from 5-phospho-alpha-D-ribose 1-diphosphate: step 5/9. Functionally, IGPS catalyzes the conversion of PRFAR and glutamine to IGP, AICAR and glutamate. The HisF subunit catalyzes the cyclization activity that produces IGP and AICAR from PRFAR using the ammonia provided by the HisH subunit. The polypeptide is Imidazole glycerol phosphate synthase subunit HisF (Yersinia pseudotuberculosis serotype O:3 (strain YPIII)).